The primary structure comprises 755 residues: ABC transporter G family member 2 (755 aa).

The ABC transporter domain occupies 98–358 (LSFTDLTYSV…FSEFKHPIPE (261 aa)). 151–158 (GASGSGKS) contacts ATP. Positions 449–659 (IEMIVIGKRA…PYEGVLQNEF (211 aa)) constitute an ABC transmembrane type-2 domain. Helical transmembrane passes span 468–488 (LLGMRLGAVMVTGIILATMFT), 503–523 (FFAFAMSTTFYTCAEAIPVFL), 552–572 (IPALIVLSASFAATTFWAVGL), 579–599 (FFFFYFTILASFWAGSSFVTF), 609–629 (LGFTVVVAILAYFLLFSGFFI), and 728–748 (LWITVAWGFFFRVLFYFTLLI).

Belongs to the ABC transporter superfamily. ABCG family. Eye pigment precursor importer (TC 3.A.1.204) subfamily.

It is found in the membrane. This is ABC transporter G family member 2 (ABCG2) from Arabidopsis thaliana (Mouse-ear cress).